A 155-amino-acid polypeptide reads, in one-letter code: DNA gyrase inhibitor (155 aa).

The protein belongs to the DNA gyrase inhibitor family. In terms of assembly, interacts with DNA gyrase.

It is found in the cytoplasm. Functionally, inhibits the supercoiling activity of DNA gyrase. Acts by inhibiting DNA gyrase at an early step, prior to (or at the step of) binding of DNA by the gyrase. It protects cells against toxins that target DNA gyrase, by inhibiting activity of these toxins and reducing the formation of lethal double-strand breaks in the cell. The polypeptide is DNA gyrase inhibitor (Edwardsiella piscicida).